The primary structure comprises 1139 residues: Autophagy-related protein 23 (1139 aa).

9 disordered regions span residues 1-148 (MFQR…EMSP), 225-327 (STDK…YDDE), 356-388 (LTTARETSTGLVESLENATRELSKTRDVASVKD), 475-569 (KNEK…DTAG), 648-674 (KKISSSTSDAEASSKMQSEMESIKTEY), 720-767 (RQES…RETE), 786-828 (EDAQ…SKLR), 935-961 (AAVEERDRIEDESATLARRKTRETEDL), and 977-1012 (HERDELEQREKEWRKRREELESVEEKAEAETDELRT). Residues 7–18 (SAIDRTIAEEQA) are compositionally biased toward basic and acidic residues. Low complexity predominate over residues 19 to 37 (RQQTATQSRSPSRTGSTSS). Coiled-coil stretches lie at residues 142–170 (KLQEMSPEIRQKLRKLEKLEATYPELLRS) and 215–259 (DMVM…STDQ). 4 stretches are compositionally biased toward basic and acidic residues: residues 225–247 (STDKDELQKKYNEAEEKAKKLEE), 261–273 (KTSDSETSKDAQD), 373–385 (ATRELSKTRDVAS), and 475–494 (KNEKSDSQTKITDLTKKLES). A coiled-coil region spans residues 323–495 (SYDDEIPQLQ…TDLTKKLESK (173 aa)). The span at 496-522 (PAPAMLTPAATPMPTVLQPAATSATAA) shows a compositional bias: low complexity. Over residues 526–537 (GKKKNNKKKKGK) the composition is skewed to basic residues. Residues 566 to 1067 (DTAGNAELKA…AAQTKLVASS (502 aa)) are a coiled coil. The span at 651-661 (SSSTSDAEASS) shows a compositional bias: low complexity. Basic and acidic residues-rich tracts occupy residues 728-767 (ATKEELANKTKELRDMEKREKDLKRDVERAQKISSDRETE), 786-815 (EDAQRVSGRDLRRSEAEKVEISGRADKAEQ), 935-945 (AAVEERDRIED), and 977-1011 (HERDELEQREKEWRKRREELESVEEKAEAETDELR). The 51-residue stretch at 1082–1132 (SPAGAPDTVYLKTILLQFLEQKDTKLRAQLVPVLGKLLRFDKTDEQKWQKA) folds into the GRIP domain.

It belongs to the ATG23 family. Forms a complex with ATG9 and ATG27.

The protein localises to the cytoplasm. It localises to the preautophagosomal structure membrane. Functionally, required for cytoplasm to vacuole transport (Cvt) vesicle formation and efficient autophagy. Plays a role in ATG protein retrieval from the pre-autophagosomal structure (PAS) and is especially required for autophagy-dependent cycling of ATG9. Autophagy is required for proper vegetative growth, asexual/sexual reproduction, and full virulence. Autophagy is particularly involved in the biosynthesis of deoxynivalenol (DON), an important virulence determinant. The sequence is that of Autophagy-related protein 23 from Gibberella zeae (strain ATCC MYA-4620 / CBS 123657 / FGSC 9075 / NRRL 31084 / PH-1) (Wheat head blight fungus).